A 123-amino-acid chain; its full sequence is Putative outer membrane protein CPn_0818/CP_1053/CPj0818/CpB0847 (123 aa).

The signal sequence occupies residues 1–30; it reads MKRQKRKQSITLIEMMVVITLIGIIGGALA.

It is found in the cell outer membrane. The polypeptide is Putative outer membrane protein CPn_0818/CP_1053/CPj0818/CpB0847 (Chlamydia pneumoniae (Chlamydophila pneumoniae)).